The sequence spans 570 residues: Frizzled-2 (570 aa).

Residues 1-28 form the signal peptide; that stretch reads MRARSALPRSALPRLLLPLLLLPAAGPA. Residues 29 to 252 lie on the Extracellular side of the membrane; it reads QFHGEKGISI…HHHTRFARLW (224 aa). The 120-residue stretch at 39-158 folds into the FZ domain; that stretch reads PDHGFCQPIS…HGAEQICVGQ (120 aa). 5 disulfides stabilise this stretch: cysteine 44/cysteine 105, cysteine 52/cysteine 98, cysteine 89/cysteine 126, cysteine 115/cysteine 155, and cysteine 119/cysteine 143. N-linked (GlcNAc...) asparagine glycosylation occurs at asparagine 58. Asparagine 159 is a glycosylation site (N-linked (GlcNAc...) asparagine). Residues 166-194 are disordered; the sequence is PALLTTAPPSGLQPGAGGTPGGPGGGGAP. A compositionally biased stretch (gly residues) spans 179-193; sequence PGAGGTPGGPGGGGA. A helical membrane pass occupies residues 253-273; it reads ILTWSVLCCASTFFTVTTSLV. Residues 274 to 284 are Cytoplasmic-facing; the sequence is AMQRFRYPERP. The chain crosses the membrane as a helical span at residues 285-305; it reads IIFLSGCYTMVSVAYIAGFVL. Topologically, residues 306–332 are extracellular; that stretch reads QERVVCNERFSEDGYRTVGQGTKKEGC. The chain crosses the membrane as a helical span at residues 333–353; sequence TILFMMLYFFSMASSIWWVIL. Residues 354–375 are Cytoplasmic-facing; sequence SLTWFLAAGMKWGHAAIEANSQ. The helical transmembrane segment at 376–396 threads the bilayer; the sequence is YFHLAAWAVPAVKTITILAMG. The Extracellular portion of the chain corresponds to 397 to 419; the sequence is QIDGDLLSGVCFVGLNRLDPLRG. A helical membrane pass occupies residues 420–440; the sequence is FVLAPLFVYLFIGTSFLLAGF. Residues 441–466 are Cytoplasmic-facing; sequence VSLFRIRTIMKHDGTKTEPLERLMVR. A helical transmembrane segment spans residues 467–487; it reads IGVFSVLYTVPATIVIACYFY. Over 488 to 524 the chain is Extracellular; that stretch reads EQAFREHWERSWVSQHCKSLAIPCPAHYTPRTSPDFT. A helical transmembrane segment spans residues 525–545; that stretch reads VYMIKYLMTLIVGITSGFWIW. Residues 546–570 lie on the Cytoplasmic side of the membrane; sequence SGKTLHSWRKFYTRLTNSRHGETTV. A Lys-Thr-X-X-X-Trp motif, mediates interaction with the PDZ domain of Dvl family members motif is present at residues 548-553; the sequence is KTLHSW. Positions 568–570 match the PDZ-binding motif; it reads TTV.

Belongs to the G-protein coupled receptor Fz/Smo family. In terms of processing, ubiquitinated by ZNRF3, leading to its degradation by the proteasome. As to expression, widely expressed. Most abundant in kidney, liver, uterus, ovary and heart. Lower levels seen in brain and intestine. Extremely low in calvaria, mammary glands and testis.

The protein resides in the membrane. It localises to the cell membrane. Its function is as follows. Receptor for Wnt proteins. Most of frizzled receptors are coupled to the beta-catenin canonical signaling pathway, which leads to the activation of disheveled proteins, inhibition of GSK-3 kinase, nuclear accumulation of beta-catenin and activation of Wnt target genes. A second signaling pathway involving PKC and calcium fluxes has been seen for some family members, but it is not yet clear if it represents a distinct pathway or if it can be integrated in the canonical pathway, as PKC seems to be required for Wnt-mediated inactivation of GSK-3 kinase. Both pathways seem to involve interactions with G-proteins. May be involved in transduction and intercellular transmission of polarity information during tissue morphogenesis and/or in differentiated tissues. Activation by Wnt5A stimulates PKC activity via a G-protein-dependent mechanism. In Rattus norvegicus (Rat), this protein is Frizzled-2 (Fzd2).